Consider the following 150-residue polypeptide: UPF0178 protein ECA0873 (150 aa).

This sequence belongs to the UPF0178 family.

The sequence is that of UPF0178 protein ECA0873 from Pectobacterium atrosepticum (strain SCRI 1043 / ATCC BAA-672) (Erwinia carotovora subsp. atroseptica).